An 80-amino-acid chain; its full sequence is ATP synthase F(1) complex subunit delta, mitochondrial (80 aa).

Residues 1-22 (MLPATLLRXSGLGRVVRQARAY) constitute a mitochondrion transit peptide.

It belongs to the ATPase epsilon chain family. As to quaternary structure, component of the ATP synthase complex composed at least of ATP5F1A/subunit alpha, ATP5F1B/subunit beta, ATP5MC1/subunit c (homooctomer), MT-ATP6/subunit a, MT-ATP8/subunit 8, ATP5ME/subunit e, ATP5MF/subunit f, ATP5MG/subunit g, ATP5MK/subunit k, ATP5MJ/subunit j, ATP5F1C/subunit gamma, ATP5F1D/subunit delta, ATP5F1E/subunit epsilon, ATP5PF/subunit F6, ATP5PB/subunit b, ATP5PD/subunit d, ATP5PO/subunit OSCP. ATP synthase complex consists of a soluble F(1) head domain (subunits alpha(3) and beta(3)) - the catalytic core - and a membrane F(0) domain - the membrane proton channel (subunits c, a, 8, e, f, g, k and j). These two domains are linked by a central stalk (subunits gamma, delta, and epsilon) rotating inside the F1 region and a stationary peripheral stalk (subunits F6, b, d, and OSCP). Component of a complex composed at least by ATPIF1, ATP5F1A, ATP5F1B, ATP5F1C AND ATP5F1E.

It is found in the mitochondrion. The protein localises to the mitochondrion inner membrane. Functionally, subunit delta, of the mitochondrial membrane ATP synthase complex (F(1)F(0) ATP synthase or Complex V) that produces ATP from ADP in the presence of a proton gradient across the membrane which is generated by electron transport complexes of the respiratory chain. ATP synthase complex consist of a soluble F(1) head domain - the catalytic core - and a membrane F(1) domain - the membrane proton channel. These two domains are linked by a central stalk rotating inside the F(1) region and a stationary peripheral stalk. During catalysis, ATP synthesis in the catalytic domain of F(1) is coupled via a rotary mechanism of the central stalk subunits to proton translocation. In vivo, can only synthesize ATP although its ATP hydrolase activity can be activated artificially in vitro. With the central stalk subunit gamma, is essential for the biogenesis of F(1) catalytic part of the ATP synthase complex namely in the formation of F1 assembly intermediate. In Sus scrofa (Pig), this protein is ATP synthase F(1) complex subunit delta, mitochondrial.